We begin with the raw amino-acid sequence, 486 residues long: Betaine aldehyde dehydrogenase (486 aa).

K(+)-binding residues include threonine 23 and aspartate 90. 147–149 (GAW) lines the NAD(+) pocket. The active-site Charge relay system is lysine 159. NAD(+) contacts are provided by residues 173–176 (KPSE) and 226–229 (ESGT). Leucine 241 is a binding site for K(+). Glutamate 247 serves as the catalytic Proton acceptor. NAD(+) is bound by residues glycine 249, cysteine 281, and glutamate 382. Cysteine 281 (nucleophile) is an active-site residue. Position 281 is a cysteine sulfenic acid (-SOH) (cysteine 281). K(+)-binding residues include lysine 452 and glycine 455. Glutamate 459 (charge relay system) is an active-site residue.

Belongs to the aldehyde dehydrogenase family. In terms of assembly, dimer of dimers. It depends on K(+) as a cofactor.

It carries out the reaction betaine aldehyde + NAD(+) + H2O = glycine betaine + NADH + 2 H(+). It functions in the pathway amine and polyamine biosynthesis; betaine biosynthesis via choline pathway; betaine from betaine aldehyde: step 1/1. Functionally, involved in the biosynthesis of the osmoprotectant glycine betaine. Catalyzes the irreversible oxidation of betaine aldehyde to the corresponding acid. The sequence is that of Betaine aldehyde dehydrogenase from Vibrio vulnificus (strain YJ016).